The chain runs to 207 residues: Large ribosomal subunit protein uL4 (207 aa).

The disordered stretch occupies residues 48–85 (THKVKNRSEVRGGGRKPWRQKGTGRARQGSIRSPQWRG). The segment covering 60–71 (GGRKPWRQKGTG) has biased composition (basic residues).

This sequence belongs to the universal ribosomal protein uL4 family. In terms of assembly, part of the 50S ribosomal subunit.

One of the primary rRNA binding proteins, this protein initially binds near the 5'-end of the 23S rRNA. It is important during the early stages of 50S assembly. It makes multiple contacts with different domains of the 23S rRNA in the assembled 50S subunit and ribosome. In terms of biological role, forms part of the polypeptide exit tunnel. The protein is Large ribosomal subunit protein uL4 of Bacillus subtilis (strain 168).